The sequence spans 339 residues: Anthranilate phosphoribosyltransferase (339 aa).

Residues glycine 79, 82–83 (GD), threonine 87, 89–92 (NIST), 107–115 (KHGNRAVSS), and serine 119 contribute to the 5-phospho-alpha-D-ribose 1-diphosphate site. Anthranilate is bound at residue glycine 79. Serine 91 serves as a coordination point for Mg(2+). Asparagine 110 contributes to the anthranilate binding site. Arginine 165 lines the anthranilate pocket. Positions 224 and 225 each coordinate Mg(2+).

The protein belongs to the anthranilate phosphoribosyltransferase family. Homodimer. Mg(2+) is required as a cofactor.

It carries out the reaction N-(5-phospho-beta-D-ribosyl)anthranilate + diphosphate = 5-phospho-alpha-D-ribose 1-diphosphate + anthranilate. The protein operates within amino-acid biosynthesis; L-tryptophan biosynthesis; L-tryptophan from chorismate: step 2/5. In terms of biological role, catalyzes the transfer of the phosphoribosyl group of 5-phosphorylribose-1-pyrophosphate (PRPP) to anthranilate to yield N-(5'-phosphoribosyl)-anthranilate (PRA). This Geobacillus thermodenitrificans (strain NG80-2) protein is Anthranilate phosphoribosyltransferase.